Here is a 521-residue protein sequence, read N- to C-terminus: 2-isopropylmalate synthase (521 aa).

The 263-residue stretch at 12–274 (VIIFDTTLRD…WNKIDTTMLT (263 aa)) folds into the Pyruvate carboxyltransferase domain. Mn(2+)-binding residues include D21, H209, H211, and N245. Positions 398-521 (KLVSLTVIAG…DMAAPAAAAS (124 aa)) are regulatory domain.

Belongs to the alpha-IPM synthase/homocitrate synthase family. LeuA type 1 subfamily. Homodimer. Mn(2+) serves as cofactor.

It localises to the cytoplasm. The enzyme catalyses 3-methyl-2-oxobutanoate + acetyl-CoA + H2O = (2S)-2-isopropylmalate + CoA + H(+). The protein operates within amino-acid biosynthesis; L-leucine biosynthesis; L-leucine from 3-methyl-2-oxobutanoate: step 1/4. Functionally, catalyzes the condensation of the acetyl group of acetyl-CoA with 3-methyl-2-oxobutanoate (2-ketoisovalerate) to form 3-carboxy-3-hydroxy-4-methylpentanoate (2-isopropylmalate). The sequence is that of 2-isopropylmalate synthase from Rhodopseudomonas palustris (strain BisA53).